A 224-amino-acid chain; its full sequence is DNA repair and recombination protein RadB (224 aa).

This sequence belongs to the eukaryotic RecA-like protein family. RadB subfamily.

Its function is as follows. Involved in DNA repair and in homologous recombination. May regulate the cleavage reactions of the branch-structured DNA. Has a very weak ATPase activity that is not stimulated by DNA. Binds DNA but does not promote DNA strands exchange. In Methanoculleus marisnigri (strain ATCC 35101 / DSM 1498 / JR1), this protein is DNA repair and recombination protein RadB.